The chain runs to 269 residues: F-box protein At5g52880 (269 aa).

In terms of domain architecture, F-box spans 109 to 155; that stretch reads DIDIPSLPQDILIHIFSFLEISSLVSSAQVSRSWNQATHENSLWQSQ.

The protein is F-box protein At5g52880 of Arabidopsis thaliana (Mouse-ear cress).